The sequence spans 271 residues: Phosphate import ATP-binding protein PstB 2 (271 aa).

In terms of domain architecture, ABC transporter spans 25 to 266; the sequence is MATEDLHVYY…PQQKQTEDYI (242 aa). Position 57–64 (57–64) interacts with ATP; that stretch reads GPSGCGKS.

The protein belongs to the ABC transporter superfamily. Phosphate importer (TC 3.A.1.7) family. As to quaternary structure, the complex is composed of two ATP-binding proteins (PstB), two transmembrane proteins (PstC and PstA) and a solute-binding protein (PstS).

It is found in the cell membrane. It catalyses the reaction phosphate(out) + ATP + H2O = ADP + 2 phosphate(in) + H(+). In terms of biological role, part of the ABC transporter complex PstSACB involved in phosphate import. Responsible for energy coupling to the transport system. This chain is Phosphate import ATP-binding protein PstB 2, found in Listeria monocytogenes serotype 4b (strain F2365).